We begin with the raw amino-acid sequence, 403 residues long: NADH-quinone oxidoreductase subunit D (403 aa).

This sequence belongs to the complex I 49 kDa subunit family. As to quaternary structure, NDH-1 is composed of 14 different subunits. Subunits NuoB, C, D, E, F, and G constitute the peripheral sector of the complex.

Its subcellular location is the cell inner membrane. The enzyme catalyses a quinone + NADH + 5 H(+)(in) = a quinol + NAD(+) + 4 H(+)(out). In terms of biological role, NDH-1 shuttles electrons from NADH, via FMN and iron-sulfur (Fe-S) centers, to quinones in the respiratory chain. The immediate electron acceptor for the enzyme in this species is believed to be ubiquinone. Couples the redox reaction to proton translocation (for every two electrons transferred, four hydrogen ions are translocated across the cytoplasmic membrane), and thus conserves the redox energy in a proton gradient. The chain is NADH-quinone oxidoreductase subunit D from Pelobacter propionicus (strain DSM 2379 / NBRC 103807 / OttBd1).